The sequence spans 902 residues: HTH-type transcriptional regulator MalT (902 aa).

ATP is bound at residue 39–46 (SPAGYGKT). The HTH luxR-type domain maps to 832–897 (ELVRTSPLTQ…EAIVTAENLL (66 aa)). The segment at residues 856–875 (NEQIAQELDVAGTTIKTHIR) is a DNA-binding region (H-T-H motif).

Belongs to the MalT family. Monomer in solution. Oligomerizes to an active state in the presence of the positive effectors ATP and maltotriose.

Its activity is regulated as follows. Activated by ATP and maltotriose, which are both required for DNA binding. Its function is as follows. Positively regulates the transcription of the maltose regulon whose gene products are responsible for uptake and catabolism of malto-oligosaccharides. Specifically binds to the promoter region of its target genes, recognizing a short DNA motif called the MalT box. The protein is HTH-type transcriptional regulator MalT of Vibrio parahaemolyticus serotype O3:K6 (strain RIMD 2210633).